Here is a 341-residue protein sequence, read N- to C-terminus: HTH-type transcriptional repressor PurR (341 aa).

The 55-residue stretch at 2–56 (ATIKDVAKHAGVSTTTVSHVINKTRFVAENTKAAVWAAIKELHYSPSAVARSLKV) folds into the HTH lacI-type domain. Positions 4–23 (IKDVAKHAGVSTTTVSHVIN) form a DNA-binding region, H-T-H motif. The DNA-binding element occupies 48–56 (SAVARSLKV). Y73, R190, T192, F221, and D275 together coordinate hypoxanthine.

As to quaternary structure, homodimer.

It functions in the pathway purine metabolism; purine nucleotide biosynthesis [regulation]. Its function is as follows. Is the main repressor of the genes involved in the de novo synthesis of purine nucleotides, regulating purB, purC, purEK, purF, purHD, purL, purMN and guaBA expression. PurR is allosterically activated to bind its cognate DNA by binding the purine corepressors, hypoxanthine or guanine, thereby effecting transcription repression. This is HTH-type transcriptional repressor PurR from Yersinia enterocolitica serotype O:8 / biotype 1B (strain NCTC 13174 / 8081).